A 192-amino-acid polypeptide reads, in one-letter code: Ras-like protein RAS2 (192 aa).

15-22 (GGGGVGKS) contacts GTP. An Effector region motif is present at residues 37–45 (YDPTIEDSY). Residues 62–66 (DTAGQ) and 121–124 (NKSD) each bind GTP. Position 189 is a cysteine methyl ester (Cys189). The S-geranylgeranyl cysteine moiety is linked to residue Cys189. The propeptide at 190–192 (IVL) is removed in mature form.

Belongs to the small GTPase superfamily. Ras family.

It is found in the cell membrane. It catalyses the reaction GTP + H2O = GDP + phosphate + H(+). With respect to regulation, alternates between an inactive form bound to GDP and an active form bound to GTP. Activated by a guanine nucleotide-exchange factor (GEF) and inactivated by a GTPase-activating protein (GAP). Functionally, ras proteins bind GDP/GTP and possess intrinsic GTPase activity. This Hydra vulgaris (Hydra) protein is Ras-like protein RAS2 (RAS2).